The following is a 156-amino-acid chain: Arginine repressor (156 aa).

The protein belongs to the ArgR family.

The protein resides in the cytoplasm. It functions in the pathway amino-acid biosynthesis; L-arginine biosynthesis [regulation]. In terms of biological role, regulates arginine biosynthesis genes. This Yersinia pseudotuberculosis serotype I (strain IP32953) protein is Arginine repressor.